Consider the following 385-residue polypeptide: GDSL esterase/lipase 5 (385 aa).

The N-terminal stretch at 1 to 35 (MRESTLMEKVTRRTISSFIFFIVSSTILFLAGKSS) is a signal peptide. N-linked (GlcNAc...) asparagine glycosylation occurs at asparagine 45. Serine 55 serves as the catalytic Nucleophile. 4 N-linked (GlcNAc...) asparagine glycosylation sites follow: asparagine 66, asparagine 194, asparagine 211, and asparagine 289. Active-site residues include aspartate 345 and histidine 348.

This sequence belongs to the 'GDSL' lipolytic enzyme family.

The protein resides in the secreted. In Arabidopsis thaliana (Mouse-ear cress), this protein is GDSL esterase/lipase 5 (GLIP5).